The sequence spans 371 residues: 2-aminoethylphosphonate--pyruvate transaminase (371 aa).

Lys-195 bears the N6-(pyridoxal phosphate)lysine mark.

This sequence belongs to the class-V pyridoxal-phosphate-dependent aminotransferase family. PhnW subfamily. In terms of assembly, homotetramer; however this is for an enzyme with a molecular weight of 16500, which is in disagreement with the weight of this protein. Pyridoxal 5'-phosphate serves as cofactor.

The catalysed reaction is (2-aminoethyl)phosphonate + pyruvate = phosphonoacetaldehyde + L-alanine. Its activity is regulated as follows. Inhibited by phosphonic acids and very slightly inhibited by aminophosphonic acids. Its function is as follows. Involved in phosphonate degradation. The protein is 2-aminoethylphosphonate--pyruvate transaminase (phnW) of Pseudomonas aeruginosa (strain ATCC 15692 / DSM 22644 / CIP 104116 / JCM 14847 / LMG 12228 / 1C / PRS 101 / PAO1).